A 174-amino-acid chain; its full sequence is Cytochrome c-type biogenesis protein CcmE (174 aa).

At 1–8 the chain is on the cytoplasmic side; that stretch reads MNPRRKSR. The chain crosses the membrane as a helical; Signal-anchor for type II membrane protein span at residues 9–29; the sequence is LSVVLFILLGISVASALVLYA. The Periplasmic portion of the chain corresponds to 30-174; the sequence is LRQNIDLFYT…QEKQFKEGNQ (145 aa). Heme contacts are provided by His-131 and Tyr-135. The interval 149–174 is disordered; the sequence is KPMGISDLKNESDRDRQEKQFKEGNQ. Basic and acidic residues predominate over residues 156 to 174; that stretch reads LKNESDRDRQEKQFKEGNQ.

This sequence belongs to the CcmE/CycJ family.

The protein resides in the cell inner membrane. Its function is as follows. Heme chaperone required for the biogenesis of c-type cytochromes. Transiently binds heme delivered by CcmC and transfers the heme to apo-cytochromes in a process facilitated by CcmF and CcmH. This Histophilus somni (strain 2336) (Haemophilus somnus) protein is Cytochrome c-type biogenesis protein CcmE.